A 420-amino-acid chain; its full sequence is Light-independent protochlorophyllide reductase subunit N (420 aa).

C21, C46, and C103 together coordinate [4Fe-4S] cluster.

Belongs to the BchN/ChlN family. As to quaternary structure, protochlorophyllide reductase is composed of three subunits; BchL, BchN and BchB. Forms a heterotetramer of two BchB and two BchN subunits. [4Fe-4S] cluster serves as cofactor.

It catalyses the reaction chlorophyllide a + oxidized 2[4Fe-4S]-[ferredoxin] + 2 ADP + 2 phosphate = protochlorophyllide a + reduced 2[4Fe-4S]-[ferredoxin] + 2 ATP + 2 H2O. It functions in the pathway porphyrin-containing compound metabolism; bacteriochlorophyll biosynthesis (light-independent). Component of the dark-operative protochlorophyllide reductase (DPOR) that uses Mg-ATP and reduced ferredoxin to reduce ring D of protochlorophyllide (Pchlide) to form chlorophyllide a (Chlide). This reaction is light-independent. The NB-protein (BchN-BchB) is the catalytic component of the complex. The protein is Light-independent protochlorophyllide reductase subunit N of Chlorobium luteolum (strain DSM 273 / BCRC 81028 / 2530) (Pelodictyon luteolum).